The primary structure comprises 987 residues: Nuclear matrix constituent protein 1b (987 aa).

The interval 1-25 (MASPRSAGGVGGGGGGGGGSGGAAA) is disordered. A compositionally biased stretch (gly residues) spans 8 to 24 (GGVGGGGGGGGGSGGAA). Coiled coils occupy residues 403–545 (LAEL…ERRA) and 594–717 (LSKI…DREA). 2 stretches are compositionally biased toward basic and acidic residues: residues 752–764 (SDINVKDNHHDNS) and 898–908 (CKEHEYGDKGP). Disordered stretches follow at residues 752–775 (SDINVKDNHHDNSHSSPKQRFGRK) and 887–987 (HDEA…FLIT). Polar residues predominate over residues 944 to 954 (ATVSATETSNV). Acidic residues predominate over residues 956 to 973 (GPEDNNDSDEEDEEEEEE).

Belongs to the CRWN family. Interacts with SWI3C.

It is found in the nucleus matrix. It localises to the nucleus lamina. In terms of biological role, architectural component of nuclear structure that plays different roles in controlling nuclear size and morphology. Involved in the modification of chromatin accessibility by interacting with SWI3C, a component of the chromatin-remodeling complex, to thus reduce the suppression effect of the complex. Acts as positive regulator of drought resistance and modulates root growth. Positively regulates the expression of genes related to root growth and drought resistance. The polypeptide is Nuclear matrix constituent protein 1b (Oryza sativa subsp. japonica (Rice)).